A 115-amino-acid polypeptide reads, in one-letter code: U3-lycotoxin-Ls1s (115 aa).

An N-terminal signal peptide occupies residues Met1–Ser20. A propeptide spanning residues Glu21–Arg44 is cleaved from the precursor. Cystine bridges form between Cys48/Cys63, Cys55/Cys72, Cys62/Cys87, and Cys74/Cys85.

The protein belongs to the neurotoxin 19 (CSTX) family. 01 subfamily. In terms of tissue distribution, expressed by the venom gland.

It is found in the secreted. The polypeptide is U3-lycotoxin-Ls1s (Lycosa singoriensis (Wolf spider)).